The primary structure comprises 104 residues: Urease subunit beta (104 aa).

Belongs to the urease beta subunit family. Heterotrimer of UreA (gamma), UreB (beta) and UreC (alpha) subunits. Three heterotrimers associate to form the active enzyme.

The protein localises to the cytoplasm. It catalyses the reaction urea + 2 H2O + H(+) = hydrogencarbonate + 2 NH4(+). Its pathway is nitrogen metabolism; urea degradation; CO(2) and NH(3) from urea (urease route): step 1/1. This is Urease subunit beta from Mycobacterium bovis (strain BCG / Pasteur 1173P2).